The primary structure comprises 386 residues: AT-hook motif nuclear-localized protein 8 (386 aa).

Disordered stretches follow at residues 1-175 and 303-372; these read MDSR…LGGT and KQSS…LHPH. A compositionally biased stretch (low complexity) spans 54–70; it reads QQQSQTFHQQQQQQMDQ. Residues 101–110 show a composition bias toward basic residues; sequence VKKKRGRPRK. The Bipartite nuclear localization signal signature appears at 102–110; the sequence is KKKRGRPRK. The a.T hook 1 DNA-binding region spans 102-114; the sequence is KKKRGRPRKYTPD. Over residues 126–135 the composition is skewed to polar residues; the sequence is PLLSAASNSY. Gly residues predominate over residues 136-147; it reads GEGGVGDSGGNG. Positions 155-167 form a DNA-binding region, a.T hook 2; sequence KRNRGRPPGSSKK. Residues 174–316 form the PPC domain; sequence GTSGVGFTPH…VNIARGQNPE (143 aa). 2 stretches are compositionally biased toward low complexity: residues 328 to 337 and 361 to 372; these read GSVSQGPSSE and QQQQQQQPLHPH.

It is found in the nucleus. Functionally, transcription factor that specifically binds AT-rich DNA sequences related to the nuclear matrix attachment regions (MARs). The chain is AT-hook motif nuclear-localized protein 8 from Arabidopsis thaliana (Mouse-ear cress).